The primary structure comprises 328 residues: WUSCHEL-related homeobox 6 (328 aa).

Residues 1 to 11 are compositionally biased toward polar residues; that stretch reads MEGSSNSPDRQ. The tract at residues 1–45 is disordered; sequence MEGSSNSPDRQSSGGSPPEERGGGGSGGGGGRSAAGEPVRSRWTP. A compositionally biased stretch (gly residues) spans 23-33; sequence GGGSGGGGGRS. The homeobox; WUS-type DNA-binding region spans 38–102; sequence PVRSRWTPKP…NRRSRSRRRQ (65 aa).

It belongs to the WUS homeobox family.

It localises to the nucleus. Functionally, transcription factor which may be involved in developmental processes. This is WUSCHEL-related homeobox 6 (WOX6) from Oryza sativa subsp. japonica (Rice).